The sequence spans 244 residues: Ferredoxin--NADP reductase B (244 aa).

In terms of domain architecture, FAD-binding FR-type spans 4–106; the sequence is AEPFEARLVA…VGPHGLFTRD (103 aa). FAD contacts are provided by residues 55-58 and Thr-120; that span reads RAYS.

It belongs to the ferredoxin--NADP reductase type 1 family. FAD serves as cofactor.

It carries out the reaction 2 reduced [4Fe-4S]-[ferredoxin] + NADP(+) + H(+) = 2 oxidized [4Fe-4S]-[ferredoxin] + NADPH. Its function is as follows. Transports electrons between NADPH and ferredoxin. Can transfer electrons to ferredoxins Fdx2 and Fdx8. Prefers NADPH to NADH. The polypeptide is Ferredoxin--NADP reductase B (Sorangium cellulosum (strain So ce56) (Polyangium cellulosum (strain So ce56))).